A 74-amino-acid chain; its full sequence is uncharacterized protein (74 aa).

This is an uncharacterized protein from Bacillus subtilis (strain 168).